Reading from the N-terminus, the 174-residue chain is MTTIVSVRRNNQVVIAGDGQVSLGNTVMKGNARKVRRLYHNKVLAGFAGGTADAFTLFERFEAKLEMHQGHLMRAAVEMAKDWRSDKVLRKLEALLAVADAESSLIITGNGDVVQPENDLIAIGSGGAFAQSAATALLENTDLSALEIAEKSLTIAGDICVFTNQFKTIEELKY.

Thr2 is a catalytic residue. Positions 157, 160, and 163 each coordinate Na(+).

Belongs to the peptidase T1B family. HslV subfamily. As to quaternary structure, a double ring-shaped homohexamer of HslV is capped on each side by a ring-shaped HslU homohexamer. The assembly of the HslU/HslV complex is dependent on binding of ATP.

The protein resides in the cytoplasm. The catalysed reaction is ATP-dependent cleavage of peptide bonds with broad specificity.. Allosterically activated by HslU binding. Protease subunit of a proteasome-like degradation complex believed to be a general protein degrading machinery. This Shewanella halifaxensis (strain HAW-EB4) protein is ATP-dependent protease subunit HslV.